Here is a 98-residue protein sequence, read N- to C-terminus: NADH-ubiquinone oxidoreductase chain 4L (98 aa).

The next 3 helical transmembrane spans lie at 1–21 (MSITYMNMFMAFTISLLGLLM), 29–49 (SLLCLEGMMLSLFVMMTMAIL), and 61–81 (IILLVFAACEAALGLSLLVMV).

The protein belongs to the complex I subunit 4L family. As to quaternary structure, core subunit of respiratory chain NADH dehydrogenase (Complex I) which is composed of 45 different subunits.

It localises to the mitochondrion inner membrane. The enzyme catalyses a ubiquinone + NADH + 5 H(+)(in) = a ubiquinol + NAD(+) + 4 H(+)(out). In terms of biological role, core subunit of the mitochondrial membrane respiratory chain NADH dehydrogenase (Complex I) which catalyzes electron transfer from NADH through the respiratory chain, using ubiquinone as an electron acceptor. Part of the enzyme membrane arm which is embedded in the lipid bilayer and involved in proton translocation. The sequence is that of NADH-ubiquinone oxidoreductase chain 4L (MT-ND4L) from Mesophylla macconnelli (MacConnell's bat).